The primary structure comprises 139 residues: D-ribose pyranase (139 aa).

Histidine 20 serves as the catalytic Proton donor. Substrate-binding positions include aspartate 28, histidine 106, and 128–130 (YAN).

The protein belongs to the RbsD / FucU family. RbsD subfamily. Homodecamer.

It localises to the cytoplasm. The enzyme catalyses beta-D-ribopyranose = beta-D-ribofuranose. It participates in carbohydrate metabolism; D-ribose degradation; D-ribose 5-phosphate from beta-D-ribopyranose: step 1/2. Functionally, catalyzes the interconversion of beta-pyran and beta-furan forms of D-ribose. This is D-ribose pyranase from Histophilus somni (strain 129Pt) (Haemophilus somnus).